The chain runs to 124 residues: Suppressor of RNA silencing (124 aa).

The tract at residues 1-14 (MPKSEFFREERKRR) is basic motif (BM). The C-2 stretch occupies residues 30 to 68 (CGYSCGMPPAVEKVSVPADTEEDVYMLIFPYEQFCGEKH). The stretch at 72 to 124 (YESLKDVSDDELKLRRLERQRETLLASFQQKLKRYDEKIALLSEKFKNLRSKL) forms a coiled coil. Residue Ser79 is modified to Phosphoserine.

This sequence belongs to the virgaviridae suppressor of RNA silencing family. In terms of assembly, homooligomer. Phosphorylated at Ser-79 by a host PKA-like kinase; the phosphorylation at this site seems to suppress host cell death.

The protein localises to the host chloroplast envelope. The protein resides in the host endoplasmic reticulum. It localises to the host cell junction. Its subcellular location is the host plasmodesma. Its function is as follows. Suppressor of RNA-mediated gene silencing, also known as post-transcriptional gene silencing (PTGS), a mechanism of plant viral defense that limits the accumulation of viral RNAs. Promotes viral cell-to-cell long distance movement. The protein is Suppressor of RNA silencing of Peanut clump virus (isolate 87/TGTA2) (PCV).